A 200-amino-acid chain; its full sequence is LexA repressor (200 aa).

A DNA-binding region (H-T-H motif) is located at residues 28–48 (RAEISNRLGFRSANAAEEHLK). Active-site for autocatalytic cleavage activity residues include serine 121 and lysine 158.

Belongs to the peptidase S24 family. In terms of assembly, homodimer.

It carries out the reaction Hydrolysis of Ala-|-Gly bond in repressor LexA.. Functionally, represses a number of genes involved in the response to DNA damage (SOS response), including recA and lexA. In the presence of single-stranded DNA, RecA interacts with LexA causing an autocatalytic cleavage which disrupts the DNA-binding part of LexA, leading to derepression of the SOS regulon and eventually DNA repair. The protein is LexA repressor of Hahella chejuensis (strain KCTC 2396).